Here is a 657-residue protein sequence, read N- to C-terminus: Katanin p80 WD40 repeat-containing subunit B1 (657 aa).

WD repeat units lie at residues 18–58 (AHSS…CVMS), 61–100 (GHTT…ILRT), 103–142 (GHKA…CIFK), 145–184 (SHTQ…VMFE), 187–226 (GHSG…VVSC), and 229–269 (EEAT…DVVV). Disordered regions lie at residues 318–410 (NNEL…EDEP) and 423–454 (VEVQ…RAEP). Residues 325 to 345 (PTPTGSSLRRSYDRPSTSCSK) show a composition bias toward polar residues. Residues 351 to 385 (HSSESERRSPSSEEDRDEKESKAEIQNPEDYKEIF) show a composition bias toward basic and acidic residues.

This sequence belongs to the WD repeat KATNB1 family. In terms of assembly, interacts with KATNA1. This interaction enhances the microtubule binding and severing activity of KATNA1 and also targets this activity to the centrosome.

Its subcellular location is the cytoplasm. It localises to the cytoskeleton. The protein resides in the microtubule organizing center. The protein localises to the centrosome. It is found in the spindle pole. Its subcellular location is the spindle. Its function is as follows. Participates in a complex which severs microtubules in an ATP-dependent manner. May act to target the enzymatic subunit of this complex to sites of action such as the centrosome. Microtubule severing may promote rapid reorganization of cellular microtubule arrays and the release of microtubules from the centrosome following nucleation. In Gallus gallus (Chicken), this protein is Katanin p80 WD40 repeat-containing subunit B1.